A 191-amino-acid polypeptide reads, in one-letter code: Ankyrin repeat domain-containing protein 22 (191 aa).

4 ANK repeats span residues 39-68, 72-100, 101-130, and 134-163; these read NGDT…NVNL, KERT…MPVL, LIGY…EVNA, and YGCT…DPTI.

The polypeptide is Ankyrin repeat domain-containing protein 22 (ANKRD22) (Homo sapiens (Human)).